Here is a 593-residue protein sequence, read N- to C-terminus: Double-stranded RNA-binding protein 2 (593 aa).

DRBM domains lie at 1–70 (MYKN…ELSK) and 87–155 (IYKN…ELKQ). Over residues 188 to 197 (LNQTNGGKTP) the composition is skewed to polar residues. Disordered stretches follow at residues 188-221 (LNQTNGGKTPQQKEKQQSSNRPSSRRPSYPKSNA), 357-408 (APDF…ESNQ), and 546-593 (VNSS…KLHI). Low complexity predominate over residues 205–219 (SSNRPSSRRPSYPKS). Over residues 378-408 (ESSPASEQESKSHTASSSATRSPSQQLESNQ) the composition is skewed to polar residues. Over residues 572–586 (RTNTSDTSNAATASS) the composition is skewed to low complexity.

Its function is as follows. Binds double-stranded RNA. The chain is Double-stranded RNA-binding protein 2 (DRB2) from Oryza sativa subsp. japonica (Rice).